The sequence spans 348 residues: MTAPSQVLKIRRPDDWHVHLRDGDMLKTVVPYTSEIYGRAIVMPNLASPITTVDAAIAYRQRILDAVPAGHDFTPLMTCYLTDSLDADELERGFHEGVFTAAKLYPANATTNSSHGVTSVDAIMPVLERMEKLGMPLLVHGEVTHADVDIFDREARFIDTVMEPLRQRLTTLKVVFEHITTKDAAQYVRDGNDYLAATITPQHLMFNRNDMLVGGIRPHLYCLPILKRNIHQQALRELVASGFTRAFLGTDSAPHSRHRKETSCGCAGCFNAPSALCSYAAVFEEMNALAHFEAFCSLNGPQFYGLPVNTGWVELVRDEQQVPENIALADDSLVPFLAGETVRWSVKK.

Zn(2+) contacts are provided by H17 and H19. Residues 19 to 21 (HLR) and N45 each bind substrate. Positions 103, 140, and 178 each coordinate Zn(2+). Residue K103 is modified to N6-carboxylysine. Substrate is bound at residue H140. L223 contributes to the substrate binding site. Position 251 (D251) interacts with Zn(2+). D251 is a catalytic residue. Residues H255 and A267 each coordinate substrate.

It belongs to the metallo-dependent hydrolases superfamily. DHOase family. Class II DHOase subfamily. As to quaternary structure, homodimer. Zn(2+) serves as cofactor.

It carries out the reaction (S)-dihydroorotate + H2O = N-carbamoyl-L-aspartate + H(+). It functions in the pathway pyrimidine metabolism; UMP biosynthesis via de novo pathway; (S)-dihydroorotate from bicarbonate: step 3/3. Its function is as follows. Catalyzes the reversible cyclization of carbamoyl aspartate to dihydroorotate. The sequence is that of Dihydroorotase from Salmonella paratyphi B (strain ATCC BAA-1250 / SPB7).